Here is a 91-residue protein sequence, read N- to C-terminus: Metalloproteinase inhibitor 2 (91 aa).

One can recognise an NTR domain in the interval 1 to 91 (KAVSEKEVDS…FIVPWDTLST (91 aa)).

This sequence belongs to the protease inhibitor I35 (TIMP) family. Post-translationally, the activity of TIMP2 is dependent on the presence of disulfide bonds.

It is found in the secreted. Functionally, complexes with metalloproteinases (such as collagenases) and irreversibly inactivates them. This chain is Metalloproteinase inhibitor 2 (TIMP2), found in Equus caballus (Horse).